A 342-amino-acid polypeptide reads, in one-letter code: N-acetyl-gamma-glutamyl-phosphate reductase (342 aa).

Residue Cys-149 is part of the active site.

This sequence belongs to the NAGSA dehydrogenase family. Type 1 subfamily.

It localises to the cytoplasm. It catalyses the reaction N-acetyl-L-glutamate 5-semialdehyde + phosphate + NADP(+) = N-acetyl-L-glutamyl 5-phosphate + NADPH + H(+). Its pathway is amino-acid biosynthesis; L-arginine biosynthesis; N(2)-acetyl-L-ornithine from L-glutamate: step 3/4. Its function is as follows. Catalyzes the NADPH-dependent reduction of N-acetyl-5-glutamyl phosphate to yield N-acetyl-L-glutamate 5-semialdehyde. This is N-acetyl-gamma-glutamyl-phosphate reductase from Cereibacter sphaeroides (strain ATCC 17025 / ATH 2.4.3) (Rhodobacter sphaeroides).